Here is a 216-residue protein sequence, read N- to C-terminus: GTP cyclohydrolase 1 (216 aa).

Residues 1–33 form a disordered region; it reads MPQARGEGATPPTSLPNPSLKGVPLPDNPNNLE. The segment covering 24-33 has biased composition (low complexity); it reads PLPDNPNNLE. Positions 102, 105, and 173 each coordinate Zn(2+).

This sequence belongs to the GTP cyclohydrolase I family. Toroid-shaped homodecamer, composed of two pentamers of five dimers.

The enzyme catalyses GTP + H2O = 7,8-dihydroneopterin 3'-triphosphate + formate + H(+). It functions in the pathway cofactor biosynthesis; 7,8-dihydroneopterin triphosphate biosynthesis; 7,8-dihydroneopterin triphosphate from GTP: step 1/1. This is GTP cyclohydrolase 1 (folE) from Deinococcus radiodurans (strain ATCC 13939 / DSM 20539 / JCM 16871 / CCUG 27074 / LMG 4051 / NBRC 15346 / NCIMB 9279 / VKM B-1422 / R1).